Consider the following 670-residue polypeptide: Oxidoreductase PigB (670 aa).

Positions 1-19 are cleaved as a signal peptide; the sequence is MIIQRLFGILYMLAGLAKA. Transmembrane regions (helical) follow at residues 53–73, 76–96, 98–118, and 238–258; these read GDVI…ILML, LWTT…VVIL, QSQP…LYML, and LVFF…VGFI.

The protein belongs to the flavin monoamine oxidase family. Requires FAD as cofactor.

It is found in the membrane. Its pathway is antibiotic biosynthesis; prodigiosin biosynthesis. In terms of biological role, involved in the biosynthesis of 2-methyl-3-n-amyl-pyrrole (MAP), one of the terminal products involved in the biosynthesis of the red antibiotic prodigiosin (Pig). Catalyzes the oxidation of dihydro form of MAP (H2MAP) to yield MAP. The sequence is that of Oxidoreductase PigB from Serratia sp. (strain ATCC 39006) (Prodigiosinella confusarubida).